The chain runs to 243 residues: LexA repressor (243 aa).

The disordered stretch occupies residues M1–N30. Residues G21 to N30 are compositionally biased toward basic and acidic residues. Residues I56–R76 constitute a DNA-binding region (H-T-H motif). Catalysis depends on for autocatalytic cleavage activity residues S167 and K204.

This sequence belongs to the peptidase S24 family. Homodimer.

The enzyme catalyses Hydrolysis of Ala-|-Gly bond in repressor LexA.. Functionally, represses a number of genes involved in the response to DNA damage (SOS response), including recA and lexA. In the presence of single-stranded DNA, RecA interacts with LexA causing an autocatalytic cleavage which disrupts the DNA-binding part of LexA, leading to derepression of the SOS regulon and eventually DNA repair. The chain is LexA repressor from Mycolicibacterium smegmatis (strain ATCC 700084 / mc(2)155) (Mycobacterium smegmatis).